We begin with the raw amino-acid sequence, 153 residues long: Endoribonuclease YbeY (153 aa).

Zn(2+) is bound by residues histidine 116, histidine 120, and histidine 126.

Belongs to the endoribonuclease YbeY family. Zn(2+) is required as a cofactor.

It is found in the cytoplasm. Functionally, single strand-specific metallo-endoribonuclease involved in late-stage 70S ribosome quality control and in maturation of the 3' terminus of the 16S rRNA. The chain is Endoribonuclease YbeY from Paraburkholderia phytofirmans (strain DSM 17436 / LMG 22146 / PsJN) (Burkholderia phytofirmans).